Consider the following 204-residue polypeptide: Large ribosomal subunit protein bL25 (204 aa).

At Ser123 the chain carries Phosphoserine.

Belongs to the bacterial ribosomal protein bL25 family. CTC subfamily. As to quaternary structure, part of the 50S ribosomal subunit; part of the 5S rRNA/L5/L18/L25 subcomplex. Contacts the 5S rRNA. Binds to the 5S rRNA independently of L5 and L18.

Its function is as follows. This is one of the proteins that binds to the 5S RNA in the ribosome where it forms part of the central protuberance. In Pseudomonas aeruginosa (strain UCBPP-PA14), this protein is Large ribosomal subunit protein bL25.